Here is a 376-residue protein sequence, read N- to C-terminus: Quinolinate synthase (376 aa).

Iminosuccinate is bound by residues His-57 and Ser-78. [4Fe-4S] cluster is bound at residue Cys-123. Iminosuccinate contacts are provided by residues 149–151 (YAN) and Ser-166. Cys-210 is a [4Fe-4S] cluster binding site. Iminosuccinate-binding positions include 236–238 (HPE) and Thr-253. Residue Cys-307 coordinates [4Fe-4S] cluster.

It belongs to the quinolinate synthase family. Type 1 subfamily. It depends on [4Fe-4S] cluster as a cofactor.

The protein resides in the cytoplasm. It carries out the reaction iminosuccinate + dihydroxyacetone phosphate = quinolinate + phosphate + 2 H2O + H(+). Its pathway is cofactor biosynthesis; NAD(+) biosynthesis; quinolinate from iminoaspartate: step 1/1. Catalyzes the condensation of iminoaspartate with dihydroxyacetone phosphate to form quinolinate. The protein is Quinolinate synthase of Paraburkholderia phymatum (strain DSM 17167 / CIP 108236 / LMG 21445 / STM815) (Burkholderia phymatum).